The primary structure comprises 103 residues: Small ribosomal subunit protein uS14c (103 aa).

The disordered stretch occupies residues 34 to 56; sequence KVSPLSLSEKTKMREKLQSLPRN.

The protein belongs to the universal ribosomal protein uS14 family. Part of the 30S ribosomal subunit.

It is found in the plastid. It localises to the chloroplast. In terms of biological role, binds 16S rRNA, required for the assembly of 30S particles. This is Small ribosomal subunit protein uS14c from Triticum aestivum (Wheat).